We begin with the raw amino-acid sequence, 641 residues long: Protein TIC 62, chloroplastic (641 aa).

A chloroplast-targeting transit peptide spans 1–63 (MEGTCFLRGQ…LSLRASGPIR (63 aa)). N-acetylalanine is present on alanine 64. 84–113 (VFVAGATGKVGSRTVRELLKLGFRVRAGVR) is a binding site for NADP(+). The segment at 328-641 (SKRPYVPPPK…SPLPSPVTNH (314 aa)) is disordered. Residues 359–372 (APKEDEAPPKEKNV) are compositionally biased toward basic and acidic residues. 2 tandem repeats follow at residues 376–397 (PLSP…PNST) and 444–465 (PLSP…PTAS). The segment at 376–638 (PLSPYASYED…PPTSPLPSPV (263 aa)) is 4 X 22 AA approximate repeats. The segment covering 393-402 (IPNSTTSVSP) has biased composition (low complexity). Over residues 435–444 (KQVEEKKERP) the composition is skewed to basic and acidic residues. Residues 485 to 528 (SSTVAKTVTETAVATSVTETSVATSVPETAVATSVTETAAPATS) show a composition bias toward low complexity. Repeat unit 3 spans residues 532 to 553 (PLSPYAIYADLKPPTSPTPAST). Polar residues predominate over residues 599–612 (AIDTSLASGDNTAQ). Residues 617-638 (PLSPYTMYADMKPPTSPLPSPV) form repeat 4. Positions 630–641 (PTSPLPSPVTNH) are enriched in pro residues.

As to quaternary structure, part of the Tic complex. Interacts with TIC110 and TIC55. Interacts with LFNR1 and LFNR2. Component of high molecular weight thylakoid LFNRs-containing protein complexes containing LIR1, LFNR1, LFNR2, TIC62 and TROL proteins. Expressed in cotyledons and leaves, but not in roots.

The protein localises to the plastid. It localises to the chloroplast inner membrane. Its subcellular location is the chloroplast stroma. The protein resides in the chloroplast thylakoid. In terms of biological role, involved in protein precursor import into chloroplasts. Part of the redox regulon consisting of TIC32, TIC 55 and TIC62. Acts as a membrane anchor of LFNR1 and LFNR2. Has a NADPH-dependent dehydrogenase activity, but only after preincubation with lipids. The sequence is that of Protein TIC 62, chloroplastic from Arabidopsis thaliana (Mouse-ear cress).